The sequence spans 648 residues: Biosynthetic arginine decarboxylase (648 aa).

The residue at position 109 (K109) is an N6-(pyridoxal phosphate)lysine. Residue 291 to 301 (IDVGGGLGIDF) coordinates substrate.

This sequence belongs to the Orn/Lys/Arg decarboxylase class-II family. SpeA subfamily. The cofactor is Mg(2+). Requires pyridoxal 5'-phosphate as cofactor.

The catalysed reaction is L-arginine + H(+) = agmatine + CO2. Its pathway is amine and polyamine biosynthesis; agmatine biosynthesis; agmatine from L-arginine: step 1/1. Catalyzes the biosynthesis of agmatine from arginine. This is Biosynthetic arginine decarboxylase from Prochlorococcus marinus (strain AS9601).